A 268-amino-acid polypeptide reads, in one-letter code: Zwei Ig domain protein zig-8 (268 aa).

The first 21 residues, 1–21, serve as a signal peptide directing secretion; the sequence is MRRFSNICVILFSFLYATGHG. Ig-like C2-type domains are found at residues 40 to 128 and 140 to 251; these read PSQT…NTVY and PSPS…NSAT. Cysteine 57 and cysteine 118 are disulfide-bonded. N-linked (GlcNAc...) asparagine glycosylation is found at asparagine 82, asparagine 155, asparagine 164, and asparagine 191. An intrachain disulfide couples cysteine 165 to cysteine 226.

Expressed in PVT neurons and pharyngeal muscles.

It is found in the secreted. Its function is as follows. Together with zig-5, required postembryonically to maintain the position of ASI and ASH head neuron cell bodies and ventral nerve cord axons of PVQ, PVP and HSN neurons by preventing their displacement that could occur during body growth and movement. May act by reducing L1CAM-like protein sax-7 (long isoform) adhesion. The sequence is that of Zwei Ig domain protein zig-8 from Caenorhabditis elegans.